The primary structure comprises 464 residues: 3-isopropylmalate dehydratase large subunit (464 aa).

[4Fe-4S] cluster contacts are provided by C337, C397, and C400.

Belongs to the aconitase/IPM isomerase family. LeuC type 1 subfamily. As to quaternary structure, heterodimer of LeuC and LeuD. [4Fe-4S] cluster serves as cofactor.

The catalysed reaction is (2R,3S)-3-isopropylmalate = (2S)-2-isopropylmalate. It functions in the pathway amino-acid biosynthesis; L-leucine biosynthesis; L-leucine from 3-methyl-2-oxobutanoate: step 2/4. Catalyzes the isomerization between 2-isopropylmalate and 3-isopropylmalate, via the formation of 2-isopropylmaleate. This is 3-isopropylmalate dehydratase large subunit from Bacillus anthracis (strain A0248).